Consider the following 575-residue polypeptide: MVAKLEQLIAQTILQGFDAQYGRFLEVTAGAQHRFEQADWHAVQQAMKKRIHLYDHHVGLVVEQLKYITDQRHFDVEFLARVKEIYTGLLPDYPRFEIAESFFNSVYCRLFKHRDLTPDKLFVFSSQPERRFREIPRPLARDFIPKGDLSGMLQMVLNDLSLRLHWENLSRDIDYIVMAIRQAFTDEQLASAHFQIANELFYRNKAAWLVGKLRLNGDIYPFLLPIHHNESGELFIDTCLTSKAEASIVFGFARSYFMVYVPLPAAMVEWLREILPGKSTAELYTAIGCQKHGKTESYREYLAFIHQSSEQFIIAPGVKGMVMLVFTLPSFDRVFKVIKDQFAPQKEVTQARVLECYQLVKEHDRVGRMADTQEYENFVIDKHRISPELLAELQHEVPEKLEDLGDKIVIKHLYMERRMTPLNLYMEQADDQQLKDAIEEYGNAIKQLAAANIFPGDMLFKNFGVTRHGRVVFYDYDEICYMTEVNFRDIPPPRYPEDEMASEPWYSVSPNDVFPEEFRHFLCSDRKVRHFFEEMHGDLFQASYWRGLQQRIRDGHVEDVFAYRRKQRFSQRALN.

Residues 315–321 and Lys336 contribute to the ATP site; that span reads APGVKGM. Asp371 is a catalytic residue.

Belongs to the AceK family.

The protein resides in the cytoplasm. The catalysed reaction is L-seryl-[isocitrate dehydrogenase] + ATP = O-phospho-L-seryl-[isocitrate dehydrogenase] + ADP + H(+). Bifunctional enzyme which can phosphorylate or dephosphorylate isocitrate dehydrogenase (IDH) on a specific serine residue. This is a regulatory mechanism which enables bacteria to bypass the Krebs cycle via the glyoxylate shunt in response to the source of carbon. When bacteria are grown on glucose, IDH is fully active and unphosphorylated, but when grown on acetate or ethanol, the activity of IDH declines drastically concomitant with its phosphorylation. This chain is Isocitrate dehydrogenase kinase/phosphatase, found in Yersinia pseudotuberculosis serotype O:1b (strain IP 31758).